The following is a 931-amino-acid chain: Protein phosphatase 1 regulatory subunit 37 homolog (931 aa).

The disordered stretch occupies residues 20–71; that stretch reads TAASSPASPIPPTSPSMFATPPHQQSHSSATSVRKKVCQEANSSADDPDSDA. The span at 41–51 shows a compositional bias: polar residues; the sequence is PHQQSHSSATS. LRR repeat units lie at residues 232–259, 262–285, 290–314, 323–346, 351–374, 379–407, 409–430, and 435–458; these read AISL…LARA, SASL…VLIC, NTGI…IYQL, LLDL…LRNR, KSAL…SLAE, NTKI…LVSN, HLHR…ILAE, and NTAL…ALHS. Residues 519 to 533 are compositionally biased toward basic and acidic residues; that stretch reads QDHVSEDTEKENKDA. Disordered regions lie at residues 519 to 602 and 780 to 807; these read QDHV…RHQR and PDCT…IRQR. Residues 534–547 are compositionally biased toward acidic residues; the sequence is DNDDKEPENEDGDT. Positions 554 to 563 are enriched in low complexity; the sequence is SDASADQSDS. 2 stretches are compositionally biased toward basic and acidic residues: residues 564 to 584 and 790 to 807; these read PADK…EKRP and TTSR…IRQR.

It belongs to the PPP1R37 family.

The protein is Protein phosphatase 1 regulatory subunit 37 homolog of Caenorhabditis briggsae.